A 363-amino-acid chain; its full sequence is Phospho-N-acetylmuramoyl-pentapeptide-transferase (363 aa).

10 helical membrane passes run 15–33, 82–102, 106–126, 147–167, 183–203, 207–227, 233–253, 260–280, 285–305, and 341–361; these read FTTLFFLITLSLIVNSFIF, NTPTMGGIFIILPLLLLLLIV, FYSMGIILLFFGSLSFFIIGF, FILQSLISILFIVLAYQNGYI, IVIFPICFVTLVGLSNAVNLT, DGLASGCGSIVFYGLGTEIFI, LIIYGLIAYAMSGLCVGFLKF, IFMGDTGSLTIGATLGYISIL, FTLFIISGIFVIEALSVIIQV, and IVENFWKINILLVILGIVLKI.

This sequence belongs to the glycosyltransferase 4 family. MraY subfamily. The cofactor is Mg(2+).

It is found in the cell inner membrane. It catalyses the reaction UDP-N-acetyl-alpha-D-muramoyl-L-alanyl-gamma-D-glutamyl-meso-2,6-diaminopimeloyl-D-alanyl-D-alanine + di-trans,octa-cis-undecaprenyl phosphate = di-trans,octa-cis-undecaprenyl diphospho-N-acetyl-alpha-D-muramoyl-L-alanyl-D-glutamyl-meso-2,6-diaminopimeloyl-D-alanyl-D-alanine + UMP. Its pathway is cell wall biogenesis; peptidoglycan biosynthesis. Catalyzes the initial step of the lipid cycle reactions in the biosynthesis of the cell wall peptidoglycan: transfers peptidoglycan precursor phospho-MurNAc-pentapeptide from UDP-MurNAc-pentapeptide onto the lipid carrier undecaprenyl phosphate, yielding undecaprenyl-pyrophosphoryl-MurNAc-pentapeptide, known as lipid I. The sequence is that of Phospho-N-acetylmuramoyl-pentapeptide-transferase from Prochlorococcus marinus (strain MIT 9515).